Here is a 214-residue protein sequence, read N- to C-terminus: Large ribosomal subunit protein uL3 (214 aa).

A disordered region spans residues 133–154 (GLGAGHGTQRKHRSPGSIGGCA).

This sequence belongs to the universal ribosomal protein uL3 family. Part of the 50S ribosomal subunit. Forms a cluster with proteins L14 and L19.

In terms of biological role, one of the primary rRNA binding proteins, it binds directly near the 3'-end of the 23S rRNA, where it nucleates assembly of the 50S subunit. The protein is Large ribosomal subunit protein uL3 of Streptomyces avermitilis (strain ATCC 31267 / DSM 46492 / JCM 5070 / NBRC 14893 / NCIMB 12804 / NRRL 8165 / MA-4680).